A 441-amino-acid polypeptide reads, in one-letter code: Ribulose bisphosphate carboxylase large chain (441 aa).

At Lys-5 the chain carries N6,N6,N6-trimethyllysine. Asn-114 and Thr-164 together coordinate substrate. The active-site Proton acceptor is the Lys-166. Lys-168 serves as a coordination point for substrate. Positions 192, 194, and 195 each coordinate Mg(2+). At Lys-192 the chain carries N6-carboxylysine. His-285 functions as the Proton acceptor in the catalytic mechanism. Substrate-binding residues include Arg-286, His-318, and Ser-370.

This sequence belongs to the RuBisCO large chain family. Type I subfamily. Heterohexadecamer of 8 large chains and 8 small chains; disulfide-linked. The disulfide link is formed within the large subunit homodimers. It depends on Mg(2+) as a cofactor. Post-translationally, the disulfide bond which can form in the large chain dimeric partners within the hexadecamer appears to be associated with oxidative stress and protein turnover.

Its subcellular location is the plastid. It is found in the chloroplast. The enzyme catalyses 2 (2R)-3-phosphoglycerate + 2 H(+) = D-ribulose 1,5-bisphosphate + CO2 + H2O. It catalyses the reaction D-ribulose 1,5-bisphosphate + O2 = 2-phosphoglycolate + (2R)-3-phosphoglycerate + 2 H(+). Functionally, ruBisCO catalyzes two reactions: the carboxylation of D-ribulose 1,5-bisphosphate, the primary event in carbon dioxide fixation, as well as the oxidative fragmentation of the pentose substrate in the photorespiration process. Both reactions occur simultaneously and in competition at the same active site. The polypeptide is Ribulose bisphosphate carboxylase large chain (Glycyrrhiza echinata (Licorice)).